The following is a 164-amino-acid chain: UBA-like domain-containing protein 2 (164 aa).

Ser-2 is modified (N-acetylserine). The segment at 128–164 (SSPTTFHHLHRPQPTWPPGAQQGGAQQKAMAAMDGQR) is disordered. Residues 146-164 (GAQQGGAQQKAMAAMDGQR) are compositionally biased toward low complexity.

The protein belongs to the UBALD family.

This chain is UBA-like domain-containing protein 2 (UBALD2), found in Homo sapiens (Human).